Reading from the N-terminus, the 322-residue chain is CPX chromosomal region candidate gene 1 protein homolog (322 aa).

Polar residues-rich tracts occupy residues methionine 1 to proline 23 and threonine 37 to aspartate 78. Residues methionine 1–glutamate 83 are disordered.

The protein is CPX chromosomal region candidate gene 1 protein homolog (Cpxcr1) of Mus musculus (Mouse).